The sequence spans 322 residues: tRNA dimethylallyltransferase (322 aa).

12–19 contacts ATP; the sequence is GPTAAGKT. 14-19 provides a ligand contact to substrate; sequence TAAGKT. Interaction with substrate tRNA stretches follow at residues 37–40 and 160–164; these read DSAL and QRLIR.

Belongs to the IPP transferase family. As to quaternary structure, monomer. Requires Mg(2+) as cofactor.

The enzyme catalyses adenosine(37) in tRNA + dimethylallyl diphosphate = N(6)-dimethylallyladenosine(37) in tRNA + diphosphate. Catalyzes the transfer of a dimethylallyl group onto the adenine at position 37 in tRNAs that read codons beginning with uridine, leading to the formation of N6-(dimethylallyl)adenosine (i(6)A). This is tRNA dimethylallyltransferase from Pseudomonas putida (Arthrobacter siderocapsulatus).